The chain runs to 101 residues: Small ribosomal subunit protein uS10 (101 aa).

This sequence belongs to the universal ribosomal protein uS10 family. In terms of assembly, part of the 30S ribosomal subunit.

In terms of biological role, involved in the binding of tRNA to the ribosomes. This is Small ribosomal subunit protein uS10 from Corynebacterium urealyticum (strain ATCC 43042 / DSM 7109).